A 95-amino-acid polypeptide reads, in one-letter code: Aspartyl/glutamyl-tRNA(Asn/Gln) amidotransferase subunit C (95 aa).

This sequence belongs to the GatC family. Heterotrimer of A, B and C subunits.

It catalyses the reaction L-glutamyl-tRNA(Gln) + L-glutamine + ATP + H2O = L-glutaminyl-tRNA(Gln) + L-glutamate + ADP + phosphate + H(+). It carries out the reaction L-aspartyl-tRNA(Asn) + L-glutamine + ATP + H2O = L-asparaginyl-tRNA(Asn) + L-glutamate + ADP + phosphate + 2 H(+). Allows the formation of correctly charged Asn-tRNA(Asn) or Gln-tRNA(Gln) through the transamidation of misacylated Asp-tRNA(Asn) or Glu-tRNA(Gln) in organisms which lack either or both of asparaginyl-tRNA or glutaminyl-tRNA synthetases. The reaction takes place in the presence of glutamine and ATP through an activated phospho-Asp-tRNA(Asn) or phospho-Glu-tRNA(Gln). This Roseobacter denitrificans (strain ATCC 33942 / OCh 114) (Erythrobacter sp. (strain OCh 114)) protein is Aspartyl/glutamyl-tRNA(Asn/Gln) amidotransferase subunit C.